Reading from the N-terminus, the 630-residue chain is Pentatricopeptide repeat-containing protein At1g62670, mitochondrial (630 aa).

A mitochondrion-targeting transit peptide spans 1-22; sequence MRISFAIASTAKRFVHRSLVVR. PPR repeat units follow at residues 44–79, 80–114, 115–149, 150–184, 185–219, 220–254, 255–289, 290–324, 325–359, 360–394, 395–429, 430–464, 465–499, 500–534, 535–569, and 570–604; these read TSYD…RPFP, SIIE…GIPH, NHYT…GYEP, NIVT…GYQP, NTVT…GCQP, DLVT…KLEP, GVLI…GIRP, NVVT…KINP, DVFT…SIDP, SIVT…HCFP, DVVT…GLVG, NTVT…GVPP, NIMT…KMEP, TIYT…GVKP, DVVA…GTLP, and NSGC…GFAG.

The protein belongs to the PPR family. P subfamily.

It is found in the mitochondrion. The protein is Pentatricopeptide repeat-containing protein At1g62670, mitochondrial of Arabidopsis thaliana (Mouse-ear cress).